The primary structure comprises 52 residues: QKLCARPSGTWSSGNCRNNNACRNFCIKLEKSRHGSCNIPFPSNKCICYFPC.

4 cysteine pairs are disulfide-bonded: C4–C52, C16–C37, C22–C46, and C26–C48.

Forms oligomers in its native state.

Functionally, possesses antifungal activity sensitive to inorganic cations. The protein is Defensin-like protein 2B of Sinapis alba (White mustard).